Consider the following 338-residue polypeptide: Aspartate carbamoyltransferase catalytic subunit (338 aa).

Arg-59 and Thr-60 together coordinate carbamoyl phosphate. L-aspartate is bound at residue Lys-87. Residues Arg-109, His-142, and Gln-145 each contribute to the carbamoyl phosphate site. Arg-182 and Arg-248 together coordinate L-aspartate. Carbamoyl phosphate contacts are provided by Gly-289 and Pro-290.

Belongs to the aspartate/ornithine carbamoyltransferase superfamily. ATCase family. Heterododecamer (2C3:3R2) of six catalytic PyrB chains organized as two trimers (C3), and six regulatory PyrI chains organized as three dimers (R2).

It carries out the reaction carbamoyl phosphate + L-aspartate = N-carbamoyl-L-aspartate + phosphate + H(+). Its pathway is pyrimidine metabolism; UMP biosynthesis via de novo pathway; (S)-dihydroorotate from bicarbonate: step 2/3. Its function is as follows. Catalyzes the condensation of carbamoyl phosphate and aspartate to form carbamoyl aspartate and inorganic phosphate, the committed step in the de novo pyrimidine nucleotide biosynthesis pathway. This is Aspartate carbamoyltransferase catalytic subunit from Synechococcus elongatus (strain ATCC 33912 / PCC 7942 / FACHB-805) (Anacystis nidulans R2).